Here is a 264-residue protein sequence, read N- to C-terminus: Nuclear egress protein 1 (264 aa).

Basic residues predominate over residues 1–12; that stretch reads MTVHKSRIRRSR. A disordered region spans residues 1-22; the sequence is MTVHKSRIRRSRSLSVTHRIQK. The CCCH-type zinc finger occupies 83–187; the sequence is CLEFSPYANE…HIVFQSRTLH (105 aa).

It belongs to the herpesviridae NEC1 protein family. In terms of assembly, forms a heterohexameric complex with NEC2. Interacts with capsid vertex specific component 2/CVC2; this interaction directs the capsid to the host inner nuclear membrane to initiate budding. Post-translationally, phosphorylated at serine residues in the N-terminus. This phosphorylation regulates the localization within the inner nuclear membrane.

It localises to the host nucleus inner membrane. In terms of biological role, plays an essential role in virion nuclear egress, the first step of virion release from infected cell. Within the host nucleus, NEC1 interacts with the newly formed capsid through the vertexes and directs it to the inner nuclear membrane by associating with NEC2. Induces the budding of the capsid at the inner nuclear membrane as well as its envelopment into the perinuclear space. There, the NEC1/NEC2 complex promotes the fusion of the enveloped capsid with the outer nuclear membrane and the subsequent release of the viral capsid into the cytoplasm where it will reach the secondary budding sites in the host Golgi or trans-Golgi network. The protein is Nuclear egress protein 1 of Human herpesvirus 6A (strain Uganda-1102) (HHV-6 variant A).